Consider the following 479-residue polypeptide: Wax ester synthase/diacylglycerol acyltransferase 2 (479 aa).

The Cytoplasmic portion of the chain corresponds to 1–182; that stretch reads MAIERQVTEA…VAPKKNKAKN (182 aa). Histidine 144 functions as the Proton acceptor in the catalytic mechanism. A helical membrane pass occupies residues 183 to 199; sequence VCFSLVAWLWFIVRLMF. At 200-479 the chain is on the lumenal side; the sequence is HTCVEVIKSI…PKKVFHASKV (280 aa). Asparagine 253 carries an N-linked (GlcNAc...) asparagine glycan.

This sequence in the N-terminal section; belongs to the long-chain O-acyltransferase family. As to expression, mostly expressed in flowers and siliques and barely in roots and stems.

The protein resides in the cell membrane. Its subcellular location is the endoplasmic reticulum membrane. The catalysed reaction is an acyl-CoA + a 1,2-diacyl-sn-glycerol = a triacyl-sn-glycerol + CoA. The enzyme catalyses a long chain fatty alcohol + a fatty acyl-CoA = a wax ester + CoA. Its pathway is glycerolipid metabolism; triacylglycerol biosynthesis. It participates in lipid metabolism. Bifunctional wax ester synthase/diacylglycerol acyltransferase. Involved in cuticular wax biosynthesis. The protein is Wax ester synthase/diacylglycerol acyltransferase 2 of Arabidopsis thaliana (Mouse-ear cress).